We begin with the raw amino-acid sequence, 209 residues long: Transcription factor 23 (209 aa).

Disordered stretches follow at residues 1–20 (MSQEATEAPAMPGEGHGHNK) and 54–85 (LSRATSAPRGTRARGTAHGRSEASPENAARER). Positions 72–85 (GRSEASPENAARER) are enriched in basic and acidic residues. The 53-residue stretch at 75–127 (EASPENAARERTRVKTLRQAFLALQAALPAVPPDTKLSKLDVLVLATSYIAHL) folds into the bHLH domain.

In terms of assembly, forms inactive heterodimeric complex with TCF3. As to expression, highly expressed in the uterus (predominantly in myometrium), ovary, and testis. Expression in the uterus is higher in the diestrus phase than in the estrus phase and reaches a maximum at 7.5 dpc. Expression declines towards the time of delivery and returns to the non-pregnant level 4 days after delivery. Low expression seen in lung, heart, intestine, and spleen.

The protein localises to the nucleus. Inhibits E-box-mediated binding and transactivation of bHLH factors. Inhibitory effect is similar to that of ID proteins. Inhibits the formation of TCF3 and MYOD1 homodimers and heterodimers. Lacks DNA binding activity. May be involved in the regulation or modulation of smooth muscle contraction of the uterus during pregnancy and particularly around the time of delivery. Seems to play a role in the inhibition of myogenesis. In Mus musculus (Mouse), this protein is Transcription factor 23 (Tcf23).